We begin with the raw amino-acid sequence, 77 residues long: Small ribosomal subunit protein bS16 (77 aa).

Belongs to the bacterial ribosomal protein bS16 family.

The protein is Small ribosomal subunit protein bS16 of Wolinella succinogenes (strain ATCC 29543 / DSM 1740 / CCUG 13145 / JCM 31913 / LMG 7466 / NCTC 11488 / FDC 602W) (Vibrio succinogenes).